An 85-amino-acid polypeptide reads, in one-letter code: U4-theraphotoxin-Hhn1j (85 aa).

An N-terminal signal peptide occupies residues 1-22 (MKVTLIAILTCAAVLVLHTTAA). Residues 23 to 48 (EELEAESQLMEVGMPDTELAAVDEER) constitute a propeptide that is removed on maturation. 3 disulfide bridges follow: C52-C66, C56-C77, and C71-C82.

This sequence belongs to the neurotoxin 12 (Hwtx-2) family. 02 (Hwtx-2) subfamily. As to expression, expressed by the venom gland.

The protein localises to the secreted. Postsynaptic neurotoxin. The protein is U4-theraphotoxin-Hhn1j of Cyriopagopus hainanus (Chinese bird spider).